The following is a 528-amino-acid chain: Major facilitator-type transporter psiT2 (528 aa).

Positions 1–20 are disordered; that stretch reads MSPERSASLEPDEHSSLLSD. Transmembrane regions (helical) follow at residues 87-107, 125-145, 148-168, 174-194, and 220-240; these read FYSGLIESVFACGEVCSIFML, LGVALFTALFGLSTSFTMMLV, VCAGLLAGATPIVHSVVSELT, ALVVPLYGLITPIGFAIGPLI, and FLPSFVPCCLAVVGVTFGYFF. A compositionally biased stretch (low complexity) spans 260–270; sequence STSSISSRTST. The disordered stretch occupies residues 260 to 299; the sequence is STSSISSRTSTLYGATDDHNRDASESTALSPEEAEDEIDS. Transmembrane regions (helical) follow at residues 322–342, 357–377, 388–408, 424–444, 460–479, and 493–513; these read FLMFLYTSSDVLFSLYCFTAV, AFSVAGVIAMLMQLCITPWVL, FCMFSFPLVFALMGCLNPLAQ, GLLYAAIAVLLLLARVCVMAF, LATANGLVQVSMTIARALCP, and NILGGHLWVLIMVTISLAGVW.

This sequence belongs to the major facilitator superfamily. TCR/Tet family.

Its subcellular location is the membrane. In terms of biological role, major facilitator-type transporter; part of the gene cluster that mediates the biosynthesis of psilocybin, a psychotropic tryptamine-derived natural product. The protein is Major facilitator-type transporter psiT2 of Psilocybe cyanescens.